Consider the following 307-residue polypeptide: UPF0276 protein Bphyt_5128 (307 aa).

This sequence belongs to the UPF0276 family.

The chain is UPF0276 protein Bphyt_5128 from Paraburkholderia phytofirmans (strain DSM 17436 / LMG 22146 / PsJN) (Burkholderia phytofirmans).